Consider the following 714-residue polypeptide: MASATSSRRQEDVEAGRRKLEQFRKRKAAEKAKKASQNTQPVDNSQQSVIDSDGAGASISNGPLKQSAESTSNETHTKDVYNLSFSNTAMDDGSKERSRQDDGQESVGKVDFSNSLELIGSSKDLTVNTRPEVVPYSNIDKQSSESFDRASTLRETASLFSGTSMQMDGFIHGSGLTSSRKDSLQPTTRMAGSFDEVAKNQQGSGELGGSIVQKPTLSSSYLFNSPDTSSRPSEPSDFSVNITSSSPLNSAKSEATVKRSRPSFLDSLNISRAPETQYQHPEIQADLVTSSGSQLSGSDGFGPSYISGRRDSNGPSSLTSGASDYPNPFEKFRSSLYPAANGVMPGFTDFSMPKQNDDFTALEQHIEDLTQEKFSLQRDLDASRALAESLASENSSMTDTYNQQRGLVNQLKDDMERLYQQIQAQMGELESVRVEYANAQLECNAADERSQILASEVISLEDKALRLRSNELKLERELEKAQTEMLSYKKKLQSLEKDRQDLQSTIKALQEEKKVLQTMVQKASSGGKSTDLSKNSTSRKNVSTSTEGLAISDTTPESSNQETDSTTLLESDSSNTAIIPETRQLTLEGFSLSVPADQMRVIHNINTLIAELAIEKEELVQALSSELSRSAHVQELNKELSRKLEAQTQRLELVTAQKMAIDNVSPEKQQPDTHVVQERTPIADEGDEVVERVLGWIMKMFPGGPSKRRTSKLL.

4 disordered regions span residues 1 to 113 (MASA…VDFS), 219 to 261 (SSYL…KRSR), 288 to 325 (VTSSGSQLSGSDGFGPSYISGRRDSNGPSSLTSGASDY), and 519 to 576 (MVQK…SSNT). A compositionally biased stretch (basic and acidic residues) spans 8–33 (RRQEDVEAGRRKLEQFRKRKAAEKAK). 2 stretches are compositionally biased toward polar residues: residues 36–50 (SQNTQPVDNSQQSVI) and 58–74 (SISNGPLKQSAESTSNE). Positions 92-102 (DGSKERSRQDD) are enriched in basic and acidic residues. Composition is skewed to polar residues over residues 219 to 253 (SSYLFNSPDTSSRPSEPSDFSVNITSSSPLNSAKS), 288 to 297 (VTSSGSQLSG), 313 to 322 (NGPSSLTSGA), and 519 to 561 (MVQK…SSNQ). A coiled-coil region spans residues 356–525 (NDDFTALEQH…LQTMVQKASS (170 aa)). The segment covering 562-576 (ETDSTTLLESDSSNT) has biased composition (low complexity).

As to quaternary structure, interacts with CLF. In terms of tissue distribution, expressed in root tips, emerging lateral roots, shoot apical meristem (SAM), vasculature of cotyledons, leaves, sepals and carpels.

The protein resides in the nucleus. The protein localises to the cytoplasm. Functionally, is required for normal leaf, flower and seed development and controls cotyledon and leaf patterning by inhibiting premature differentiation. Regulates the expression of a subset of PcG target genes. Is required for the repression of the floral specific genes PI, SEP2, and SEP3, but also for the activation of FLC. Involved in response to cold. Involved in the regulation of COR15A, COR15B, BAM3 and AMY3 transcripts, and ascorbate levels in response to prolonged chilling temperatures. The polypeptide is Protein BLISTER (Arabidopsis thaliana (Mouse-ear cress)).